Reading from the N-terminus, the 144-residue chain is Ribosomal RNA large subunit methyltransferase H (144 aa).

S-adenosyl-L-methionine contacts are provided by residues Leu63, Gly92, and 111–116 (LSPMTF).

It belongs to the RNA methyltransferase RlmH family. As to quaternary structure, homodimer.

It localises to the cytoplasm. It carries out the reaction pseudouridine(1915) in 23S rRNA + S-adenosyl-L-methionine = N(3)-methylpseudouridine(1915) in 23S rRNA + S-adenosyl-L-homocysteine + H(+). Specifically methylates the pseudouridine at position 1915 (m3Psi1915) in 23S rRNA. This is Ribosomal RNA large subunit methyltransferase H from Synechococcus sp. (strain CC9605).